Consider the following 129-residue polypeptide: Ribosome-binding factor A (129 aa).

Belongs to the RbfA family. In terms of assembly, monomer. Binds 30S ribosomal subunits, but not 50S ribosomal subunits or 70S ribosomes.

The protein localises to the cytoplasm. Functionally, one of several proteins that assist in the late maturation steps of the functional core of the 30S ribosomal subunit. Associates with free 30S ribosomal subunits (but not with 30S subunits that are part of 70S ribosomes or polysomes). Required for efficient processing of 16S rRNA. May interact with the 5'-terminal helix region of 16S rRNA. In Actinobacillus succinogenes (strain ATCC 55618 / DSM 22257 / CCUG 43843 / 130Z), this protein is Ribosome-binding factor A.